Consider the following 178-residue polypeptide: Endoribonuclease YbeY (178 aa).

Zn(2+) contacts are provided by His-118, His-122, and His-128.

Belongs to the endoribonuclease YbeY family. Zn(2+) is required as a cofactor.

The protein resides in the cytoplasm. Functionally, single strand-specific metallo-endoribonuclease involved in late-stage 70S ribosome quality control and in maturation of the 3' terminus of the 16S rRNA. In Mycobacterium leprae (strain Br4923), this protein is Endoribonuclease YbeY.